Here is a 130-residue protein sequence, read N- to C-terminus: Small ribosomal subunit protein uS11c (130 aa).

The protein belongs to the universal ribosomal protein uS11 family. As to quaternary structure, part of the 30S ribosomal subunit.

The protein localises to the plastid. It localises to the chloroplast. The polypeptide is Small ribosomal subunit protein uS11c (Chaetosphaeridium globosum (Charophycean green alga)).